A 520-amino-acid polypeptide reads, in one-letter code: Cyclic GMP-AMP synthase-like receptor (520 aa).

Residues Ser68 and 80-82 (EFD) contribute to the ATP site. Glu80, Asp82, and Asp198 together coordinate Mg(2+). Asp198 provides a ligand contact to GTP. Lys264 is an ATP binding site. Residues Leu288 and Asp294 each contribute to the Mn(2+) site.

It belongs to the mab-21 family. It depends on Mg(2+) as a cofactor. Requires Mn(2+) as cofactor.

It carries out the reaction GTP + ATP = 2',3'-cGAMP + 2 diphosphate. The catalysed reaction is GTP + ATP = pppGp(2'-5')A + diphosphate. The enzyme catalyses pppGp(2'-5')A = 2',3'-cGAMP + diphosphate. Its function is as follows. Nucleotidyltransferase that catalyzes the formation of cyclic GMP-AMP (2',3'-cGAMP) from ATP and GTP and plays a key role in innate immunity. Acts as a key sensor of double-stranded RNA (dsRNA), the presence of dsRNA in the cytoplasm being a danger signal that triggers the immune responses. Directly binds dsRNA, activating the nucleotidyltransferase activity, leading to synthesis of 2',3'-cGAMP, a second messenger that binds to and activates Sting, thereby triggering the immune response via activation of the NF-kappa-B transcription factor. This chain is Cyclic GMP-AMP synthase-like receptor, found in Microplitis demolitor (Parasitoid wasp).